A 246-amino-acid chain; its full sequence is 4-hydroxy-tetrahydrodipicolinate reductase (246 aa).

9 to 14 (GNTGRM) is an NAD(+) binding site. R36 is an NADP(+) binding site. Residues 78–80 (GTT) and 104–107 (SPNM) each bind NAD(+). Residue H137 is the Proton donor/acceptor of the active site. H138 provides a ligand contact to (S)-2,3,4,5-tetrahydrodipicolinate. Catalysis depends on K141, which acts as the Proton donor. (S)-2,3,4,5-tetrahydrodipicolinate is bound at residue 147–148 (GT).

The protein belongs to the DapB family.

The protein localises to the cytoplasm. The catalysed reaction is (S)-2,3,4,5-tetrahydrodipicolinate + NAD(+) + H2O = (2S,4S)-4-hydroxy-2,3,4,5-tetrahydrodipicolinate + NADH + H(+). It carries out the reaction (S)-2,3,4,5-tetrahydrodipicolinate + NADP(+) + H2O = (2S,4S)-4-hydroxy-2,3,4,5-tetrahydrodipicolinate + NADPH + H(+). It functions in the pathway amino-acid biosynthesis; L-lysine biosynthesis via DAP pathway; (S)-tetrahydrodipicolinate from L-aspartate: step 4/4. In terms of biological role, catalyzes the conversion of 4-hydroxy-tetrahydrodipicolinate (HTPA) to tetrahydrodipicolinate. This Chlamydia muridarum (strain MoPn / Nigg) protein is 4-hydroxy-tetrahydrodipicolinate reductase.